We begin with the raw amino-acid sequence, 277 residues long: Histone-lysine N-methyltransferase set-17 (277 aa).

Residues 135 to 246 (FRIEESKLPN…INQELLVWYG (112 aa)) form the SET domain. Tyr245 provides a ligand contact to S-adenosyl-L-methionine.

It belongs to the class V-like SAM-binding methyltransferase superfamily. In terms of tissue distribution, expressed in the germline. Predominantly expressed in primary spermatocytes. Also expressed in the oocyte-producing germline of hermaphrodites.

It localises to the nucleus. It catalyses the reaction N(6)-methyl-L-lysyl(4)-[histone H3] + S-adenosyl-L-methionine = N(6),N(6)-dimethyl-L-lysyl(4)-[histone H3] + S-adenosyl-L-homocysteine + H(+). It carries out the reaction L-lysyl(4)-[histone H3] + S-adenosyl-L-methionine = N(6)-methyl-L-lysyl(4)-[histone H3] + S-adenosyl-L-homocysteine + H(+). Histone methyltransferase that specifically mono- and di-methylates 'Lys-4' of histone H3 in vitro. Does not tri-methylate 'Lys-4' of histone H3 in vitro. Promotes spermatid development and fertility by positively regulating the transcription of spermatocyte-specific genes in primary spermatocytes. Together with spr-5, required for transgenerational fertility. This is Histone-lysine N-methyltransferase set-17 from Caenorhabditis elegans.